Here is a 517-residue protein sequence, read N- to C-terminus: Nuclear receptor subfamily 5 group A member 2 (517 aa).

The segment at residues 43–118 (DEMCPVCGDK…VGMKLEAVRA (76 aa)) is a DNA-binding region (nuclear receptor). Residues C46, C49, C63, C66, C82, C88, C98, and C101 each contribute to the Zn(2+) site. 2 NR C4-type zinc fingers span residues 46 to 66 (CPVC…CESC) and 82 to 101 (CIEN…CPYC). Residues 112 to 127 (KLEAVRADRMRGGRNK) are C-terminal extension (CTE). The FTZ-F1 box motif lies at 128-147 (FGPMYKRDRALKQQKKALIR). Positions 182–211 (GLPLSHHHHHHHHHHHHSSSSAGLPPADFD) are disordered. Positions 186–199 (SHHHHHHHHHHHHS) are enriched in basic residues. One can recognise an NR LBD domain in the interval 276 to 515 (SFPHLVVELL…NLLIEMLHAK (240 aa)). A phospholipid derivative is bound by residues 397-400 (GATL), Y492, and K496. Residues 504-515 (CNNLLIEMLHAK) are AF-2.

The protein belongs to the nuclear hormone receptor family. NR5 subfamily. In terms of assembly, monomer; Binds DNA as a monomer.

It is found in the nucleus. The protein localises to the chromosome. Orphan nuclear receptor that binds DNA as a monomer to the 5'-TCAAGGCCA-3' sequence and controls expression of target genes: regulates key biological processes, such as cholesterol and bile acid synthesis pathways, as well as cartilage, liver and pancreas morphogenesis. Ligand-binding causes conformational change which causes recruitment of coactivators, promoting target gene activation. The specific ligand is unknown, but specific phospholipids, such as phosphatidylethanolamine, phosphatidylserine, dilauroyl phosphatidylcholine and diundecanoyl phosphatidylcholine can act as ligand in vitro. Acts as a pioneer transcription factor, which unwraps target DNA from histones and elicits local opening of closed chromatin. Involved in the formation of connective tissue in lower jaw. Its function is as follows. Lacks transcription factor activity; unable to activate expression of target genes. The sequence is that of Nuclear receptor subfamily 5 group A member 2 from Danio rerio (Zebrafish).